The sequence spans 536 residues: Probable cytochrome P450 12a5, mitochondrial (536 aa).

Cys-482 is a binding site for heme.

Belongs to the cytochrome P450 family. It depends on heme as a cofactor.

The protein localises to the mitochondrion membrane. The chain is Probable cytochrome P450 12a5, mitochondrial (Cyp12a5) from Drosophila melanogaster (Fruit fly).